We begin with the raw amino-acid sequence, 694 residues long: Elongation factor G 1 (694 aa).

The tr-type G domain maps to 5–280 (SRYRNIGIFA…AVVDYLPDPT (276 aa)). GTP-binding positions include 14-21 (AHVDAGKT), 78-82 (DTPGH), and 132-135 (NKLD).

Belongs to the TRAFAC class translation factor GTPase superfamily. Classic translation factor GTPase family. EF-G/EF-2 subfamily.

The protein resides in the cytoplasm. Functionally, catalyzes the GTP-dependent ribosomal translocation step during translation elongation. During this step, the ribosome changes from the pre-translocational (PRE) to the post-translocational (POST) state as the newly formed A-site-bound peptidyl-tRNA and P-site-bound deacylated tRNA move to the P and E sites, respectively. Catalyzes the coordinated movement of the two tRNA molecules, the mRNA and conformational changes in the ribosome. The polypeptide is Elongation factor G 1 (Methylococcus capsulatus (strain ATCC 33009 / NCIMB 11132 / Bath)).